A 217-amino-acid polypeptide reads, in one-letter code: UPF0319 protein HSM_0266 (217 aa).

Residues 1–21 form the signal peptide; that stretch reads MKFSFAALASAMLLTSTAAFA.

The protein belongs to the UPF0319 family.

In Histophilus somni (strain 2336) (Haemophilus somnus), this protein is UPF0319 protein HSM_0266.